The sequence spans 137 residues: Large ribosomal subunit protein uL16 (137 aa).

It belongs to the universal ribosomal protein uL16 family. Part of the 50S ribosomal subunit.

Its function is as follows. Binds 23S rRNA and is also seen to make contacts with the A and possibly P site tRNAs. This Alkalilimnicola ehrlichii (strain ATCC BAA-1101 / DSM 17681 / MLHE-1) protein is Large ribosomal subunit protein uL16.